The following is a 497-amino-acid chain: MEIIPNLSIETWVLLATSLMLFYIYGTYSHGLFKKLGIPGPKPVPLFGTIFNYGDGMWKFDDDCYKKYGKIWGFYEGPQPFLAIMDPEIIKMVLVKECYSVFTNRRCFGPMGFMKKAITMSEDEEWKRLRTILSPTFTSGKLKEMFPLMRQYGDTLLKNLRREEAKGEPINMKDIFGAYSMDVITGTSFGVNVDSLNNPQDPFVQKAKKILKFQIFDPFLLSVVLFPFLTPIYEMLNFSIFPRQSMNFFKKFVKTMKKNRLDSNQKNRVDFLQLMMNTQNSKGQESQKALSDLEMAAQAIIFIFGGYDATSTSISFIMYELATRPNVQKKLQNEIDRALPNKAPVTYDALMEMEYLDMVVNESLRLYPIATRLDRVSKKDVEINGVFIPKGTVVTIPIYPLHRNPEYWLEPEEFNPERFSKENKGSIDPYVYLPFGNGPRNCIGMRFALISMKLAVIGVLQNFNIQPCEKTQIPLKISRQPIFQPEGPIILKLVSRD.

Cys442 contributes to the heme binding site.

It belongs to the cytochrome P450 family. Heme is required as a cofactor.

The protein localises to the endoplasmic reticulum membrane. It is found in the microsome membrane. The catalysed reaction is an organic molecule + reduced [NADPH--hemoprotein reductase] + O2 = an alcohol + oxidized [NADPH--hemoprotein reductase] + H2O + H(+). In terms of biological role, catalyzes 16-beta- and 6-alpha-hydroxylations of testosterone. This is Cytochrome P450 3A18 (Cyp3a18) from Rattus norvegicus (Rat).